We begin with the raw amino-acid sequence, 252 residues long: Uridylate kinase (252 aa).

23–26 (KLSG) provides a ligand contact to ATP. Gly65 is a binding site for UMP. ATP contacts are provided by Gly66 and Arg70. Residues Asp85 and 146–153 (LGAPFFST) contribute to the UMP site. The ATP site is built by Thr173, Gln174, Tyr179, and Asp182.

Belongs to the UMP kinase family. In terms of assembly, homohexamer.

The protein resides in the cytoplasm. It catalyses the reaction UMP + ATP = UDP + ADP. Its pathway is pyrimidine metabolism; CTP biosynthesis via de novo pathway; UDP from UMP (UMPK route): step 1/1. Its activity is regulated as follows. Inhibited by UTP. In terms of biological role, catalyzes the reversible phosphorylation of UMP to UDP. This is Uridylate kinase from Thermobifida fusca (strain YX).